Reading from the N-terminus, the 85-residue chain is Large ribosomal subunit protein eL43 (85 aa).

A C4-type zinc finger spans residues Cys38 to Cys59.

This sequence belongs to the eukaryotic ribosomal protein eL43 family. Requires Zn(2+) as cofactor.

The sequence is that of Large ribosomal subunit protein eL43 from Thermococcus sibiricus (strain DSM 12597 / MM 739).